A 1383-amino-acid chain; its full sequence is Palladin (1383 aa).

Disordered stretches follow at residues 1–22 (MSGT…EESK), 52–169 (DSET…SQLC), and 183–238 (FKAA…KSPG). The span at 78–96 (HPSHKETKLGEHASRRPQD) shows a compositional bias: basic and acidic residues. Positions 191–201 (RSPNGESSSPD) are enriched in polar residues. The residue at position 192 (Ser192) is a Phosphoserine. Residues 210–223 (QPSALLSASASQSP) are compositionally biased toward low complexity. Positions 271–360 (PRFIQKLRSQ…GSDTTSAEVF (90 aa)) constitute an Ig-like C2-type 1 domain. A disulfide bond links Cys292 and Cys344. Ser401 is modified (phosphoserine). The Ig-like C2-type 2 domain maps to 440–539 (PPVFTKELQN…ATSTAQLVVT (100 aa)). Cys462 and Cys521 form a disulfide bridge. An interaction with VASP region spans residues 562–566 (FPPPP). 3 disordered regions span residues 609 to 653 (ETNG…LAKP), 673 to 728 (AGAR…SSGS), and 740 to 846 (AQNL…RFGH). Ser632 is subject to Phosphoserine. Thr635 bears the Phosphothreonine mark. Ser641 is subject to Phosphoserine. The tract at residues 646-676 (PPPLLAKPKLDPLKLQQLQNQIRLEQEAGAR) is interaction with LASP1. The segment at 676–696 (RQPPPAPRSAPPSPPFPPPPA) is interaction with SORBS2, SPIN90 and SRC. Over residues 677-697 (QPPPAPRSAPPSPPFPPPPAF) the composition is skewed to pro residues. Residues Ser684, Ser688, and Ser728 each carry the phosphoserine modification. The segment covering 745-763 (PASGHGTPASSPSSSSLPS) has biased composition (low complexity). The tract at residues 766–831 (SPTPRQFGRA…PPPPPPLPSP (66 aa)) is interaction with EPS8. Positions 796–831 (SPSPPPPPPPVFSPTAAFPVPDVFPLPPPPPPLPSP) are interaction with SORBS2, SPIN90, SRC and PFN1. Pro residues-rich tracts occupy residues 797–807 (PSPPPPPPPVF) and 817–830 (DVFP…PLPS). Residues 819–823 (FPLPP) form an interaction with VASP region. Residues 832-846 (GQASHCSSPATRFGH) show a composition bias toward polar residues. Positions 833 to 890 (QASHCSSPATRFGHSQTPAAFLSALLPSQPPPAAVNALGLPKGVTPAGFPKKASRTAR) are interaction with ACTN. Residues Ser893, Ser979, and Ser984 each carry the phosphoserine modification. Residues 1001–1085 (PFFEMKLKHY…MAANPQGRIS (85 aa)) enclose the Ig-like C2-type 3 domain. Residues 1096 to 1125 (NQRGRSPRSPSGHPHVRRPRSRSRDSGDEN) are disordered. Residues 1098-1108 (RGRSPRSPSGH) are compositionally biased toward low complexity. Phosphoserine occurs at positions 1101, 1104, 1106, and 1116. Ser1118 bears the Phosphoserine; by PKB/AKT1 mark. Phosphoserine is present on Ser1121. 2 Ig-like C2-type domains span residues 1135–1226 (PHFL…LVVA) and 1233–1324 (PPVF…ARLD). 2 interaction with EZR regions span residues 1137 to 1226 (FLQA…LVVA) and 1236 to 1326 (FIEK…LDVY). A disulfide bond links Cys1156 and Cys1208. At Ser1352 the chain carries Phosphoserine.

Belongs to the myotilin/palladin family. In terms of assembly, interacts with EPS8. Interacts with LASP1. Interacts with VASP. Interacts with ACTN. Interacts with SORBS2. Interacts with PFN1. Interacts with LPP. Interacts with SPIN90. Interacts with SRC. Interacts with EZR. Interacts with RAI14. In terms of processing, phosphorylated predominantly on serines and, to a lesser extent, on tyrosines. Phosphorylation at Ser-1118 by PKB/AKT1 modulates cytoskeletal organization and cell motility. Detected in both muscle and non-muscle tissues. High expression in prostate, ovary, colon, and kidney. Not detected in spleen, skeletal muscle, lung and peripheral blood lymphocytes (at protein level). Protein is overexpressed in FA6, HPAF, IMIM-PC2, SUIT-2 and PancTu-II sporadic pancreatic cancer cell lines.

The protein resides in the cytoplasm. It is found in the cytoskeleton. It localises to the cell junction. The protein localises to the focal adhesion. Its subcellular location is the myofibril. The protein resides in the sarcomere. It is found in the z line. It localises to the cell projection. The protein localises to the ruffle. Its subcellular location is the podosome. The protein resides in the lamellipodium. It is found in the axon. It localises to the growth cone. Its function is as follows. Cytoskeletal protein required for organization of normal actin cytoskeleton. Roles in establishing cell morphology, motility, cell adhesion and cell-extracellular matrix interactions in a variety of cell types. May function as a scaffolding molecule with the potential to influence both actin polymerization and the assembly of existing actin filaments into higher-order arrays. Binds to proteins that bind to either monomeric or filamentous actin. Localizes at sites where active actin remodeling takes place, such as lamellipodia and membrane ruffles. Different isoforms may have functional differences. Involved in the control of morphological and cytoskeletal changes associated with dendritic cell maturation. Involved in targeting ACTN to specific subcellular foci. The sequence is that of Palladin (PALLD) from Homo sapiens (Human).